A 38-amino-acid polypeptide reads, in one-letter code: Defensin-1 (38 aa).

3 disulfide bridges follow: Cys-4-Cys-25, Cys-11-Cys-33, and Cys-15-Cys-35.

It localises to the secreted. Its function is as follows. Has antibacterial activity against the Gram-positive bacteria L.lactis and S.aureus, and against the Gram-negative bacteria E.coli D32 and V.parahemolyticus. The sequence is that of Defensin-1 from Crassostrea virginica (Eastern oyster).